Here is a 156-residue protein sequence, read N- to C-terminus: ATP synthase subunit b (156 aa).

Residues 5 to 27 (ITLIGQMITFAIFIGFTMKFVWP) form a helical membrane-spanning segment.

The protein belongs to the ATPase B chain family. F-type ATPases have 2 components, F(1) - the catalytic core - and F(0) - the membrane proton channel. F(1) has five subunits: alpha(3), beta(3), gamma(1), delta(1), epsilon(1). F(0) has three main subunits: a(1), b(2) and c(10-14). The alpha and beta chains form an alternating ring which encloses part of the gamma chain. F(1) is attached to F(0) by a central stalk formed by the gamma and epsilon chains, while a peripheral stalk is formed by the delta and b chains.

The protein resides in the cell inner membrane. F(1)F(0) ATP synthase produces ATP from ADP in the presence of a proton or sodium gradient. F-type ATPases consist of two structural domains, F(1) containing the extramembraneous catalytic core and F(0) containing the membrane proton channel, linked together by a central stalk and a peripheral stalk. During catalysis, ATP synthesis in the catalytic domain of F(1) is coupled via a rotary mechanism of the central stalk subunits to proton translocation. In terms of biological role, component of the F(0) channel, it forms part of the peripheral stalk, linking F(1) to F(0). The sequence is that of ATP synthase subunit b from Francisella tularensis subsp. holarctica (strain OSU18).